The chain runs to 458 residues: Divalent metal cation transporter MntH (458 aa).

11 consecutive transmembrane segments (helical) span residues 38 to 58 (GFWK…VGYM), 86 to 106 (LIAM…GMDL), 119 to 139 (GIFL…AEII), 151 to 171 (IPLL…LLLM), 180 to 200 (AIVA…VILA), 223 to 243 (MLFL…LYLH), 275 to 295 (LTIA…MFYG), 315 to 335 (IVGS…LLAS), 370 to 390 (GLSI…EAQV), 395 to 415 (IYSQ…LTLF), and 436 to 456 (WFVT…TVGL).

It belongs to the NRAMP family.

The protein resides in the cell membrane. Functionally, h(+)-stimulated, divalent metal cation uptake system. The sequence is that of Divalent metal cation transporter MntH from Latilactobacillus sakei subsp. sakei (strain 23K) (Lactobacillus sakei subsp. sakei).